The chain runs to 173 residues: Chromophore lyase CpcS/CpeS 3 (173 aa).

It belongs to the CpcS/CpeS biliprotein lyase family.

Covalently attaches a chromophore to Cys residue(s) of phycobiliproteins. The protein is Chromophore lyase CpcS/CpeS 3 of Trichodesmium erythraeum (strain IMS101).